The primary structure comprises 812 residues: Glycerol-3-phosphate acyltransferase (812 aa).

The HXXXXD motif motif lies at 308-313 (CHRSHM).

It belongs to the GPAT/DAPAT family.

The protein localises to the cell inner membrane. The catalysed reaction is sn-glycerol 3-phosphate + an acyl-CoA = a 1-acyl-sn-glycero-3-phosphate + CoA. The protein operates within phospholipid metabolism; CDP-diacylglycerol biosynthesis; CDP-diacylglycerol from sn-glycerol 3-phosphate: step 1/3. The chain is Glycerol-3-phosphate acyltransferase from Pseudoalteromonas translucida (strain TAC 125).